The sequence spans 168 residues: Peptide deformylase (168 aa).

2 residues coordinate Fe cation: Cys-92 and His-134. Glu-135 is an active-site residue. His-138 is a Fe cation binding site.

Belongs to the polypeptide deformylase family. The cofactor is Fe(2+).

The enzyme catalyses N-terminal N-formyl-L-methionyl-[peptide] + H2O = N-terminal L-methionyl-[peptide] + formate. In terms of biological role, removes the formyl group from the N-terminal Met of newly synthesized proteins. Requires at least a dipeptide for an efficient rate of reaction. N-terminal L-methionine is a prerequisite for activity but the enzyme has broad specificity at other positions. The polypeptide is Peptide deformylase (Azotobacter vinelandii (strain DJ / ATCC BAA-1303)).